The chain runs to 78 residues: Small ribosomal subunit protein bS18 (78 aa).

Belongs to the bacterial ribosomal protein bS18 family. Part of the 30S ribosomal subunit. Forms a tight heterodimer with protein bS6.

Binds as a heterodimer with protein bS6 to the central domain of the 16S rRNA, where it helps stabilize the platform of the 30S subunit. This Kocuria rhizophila (strain ATCC 9341 / DSM 348 / NBRC 103217 / DC2201) protein is Small ribosomal subunit protein bS18.